The following is a 155-amino-acid chain: Fibroblast growth factor 1 (155 aa).

Residue A2 is modified to N-acetylalanine. A propeptide spanning residues 2-15 is cleaved from the precursor; sequence AEGETTTFRALTEK. N33 provides a ligand contact to heparin. The segment at 127 to 143 is heparin-binding; that stretch reads KKNGSSKLGPRTHFGQK.

Belongs to the heparin-binding growth factors family. Monomer. Homodimer. Interacts with FGFR1, FGFR2, FGFR3 and FGFR4. Affinity between fibroblast growth factors (FGFs) and their receptors is increased by heparan sulfate glycosaminoglycans that function as coreceptors. Found in a complex with FGFBP1, FGF1 and FGF2. Interacts with FGFBP1. Part of a Cu(2+)-dependent multiprotein aggregate containing FGF1, S100A13 and SYT1. Interacts with SYT1. Interacts with S100A13. Interacts with LRRC59. Interacts with CSNKA, CSNKB and FIBP. While binding with LRRC59, CSNKA and FIBP seem mutually exclusive, CSNKB and FIBP may cooperatively interact with FGF1. Forms a ternary complex with FGFR1 and ITGAV:ITGB3 and induces the recruitment of PTPN11 to the complex. In terms of processing, in the nucleus, phosphorylated by PKC/PRKCD.

The protein resides in the secreted. It localises to the cytoplasm. The protein localises to the cell cortex. It is found in the cytosol. Its subcellular location is the nucleus. Plays an important role in the regulation of cell survival, cell division, angiogenesis, cell differentiation and cell migration. Functions as a potent mitogen in vitro. Acts as a ligand for FGFR1 and integrins. Binds to FGFR1 in the presence of heparin leading to FGFR1 dimerization and activation via sequential autophosphorylation on tyrosine residues which act as docking sites for interacting proteins, leading to the activation of several signaling cascades. Binds to integrin ITGAV:ITGB3. Its binding to integrin, subsequent ternary complex formation with integrin and FGFR1, and the recruitment of PTPN11 to the complex are essential for FGF1 signaling. Induces the phosphorylation and activation of FGFR1, FRS2, MAPK3/ERK1, MAPK1/ERK2 and AKT1. Can induce angiogenesis. This is Fibroblast growth factor 1 (FGF1) from Ovis aries (Sheep).